Here is a 239-residue protein sequence, read N- to C-terminus: SVPPPVYGCHTPTDSCTGSQALLLRTPYNSDNLYQMTSQLECMTWNQMNLGATLKGHTTGYENDNHTTPILCGAQYRIHTHGVFRGIQDVRRVPGVAPTIVRSATETNEKRPFMCAYPGCNKRYFKLSHLQMHSRKHTGEKPYQCDFKDCERRFSRSDQLKRHQRRHTGVKPFQCKTCQRKFSRSDHLKTHTRTHTGKTSEKPFSCRWPSCQKKFARSDELVRHHNMHQRNMTKLQLTL.

The short motif at 43–51 (MTWNQMNLG) is the 9aaTAD element. C2H2-type zinc fingers lie at residues 113–137 (FMCA…SRKH), 143–167 (YQCD…QRRH), and 173–195 (FQCK…TRTH). Important for interaction with target DNA regions lie at residues 157–171 (SDQL…TGVK) and 183–191 (SRSDHLKTH). Residues 198–200 (KTS) carry the KTS motif motif. A C2H2-type 4 zinc finger spans residues 204 to 228 (FSCRWPSCQKKFARSDELVRHHNMH). Residue lysine 234 forms a Glycyl lysine isopeptide (Lys-Gly) (interchain with G-Cter in SUMO2) linkage.

The protein belongs to the EGR C2H2-type zinc-finger protein family. As to quaternary structure, interacts with ZNF224 via the zinc-finger region. Interacts with WTAP, AMER1 and SRY. Homodimer. Interacts with WTIP. Interacts with actively translating polysomes. Detected in nuclear ribonucleoprotein (mRNP) particles. Interacts with U2AF2. Interacts with HNRNPU via the zinc-finger region. Interacts with CITED2.

Its subcellular location is the nucleus speckle. It localises to the nucleus. It is found in the nucleoplasm. The protein localises to the cytoplasm. Its function is as follows. Transcription factor that plays an important role in cellular development and cell survival. Recognizes and binds to the DNA sequence 5'-GCG(T/G)GGGCG-3'. Regulates the expression of numerous target genes, including EPO. Plays an essential role for development of the urogenital system. It has a tumor suppressor as well as an oncogenic role in tumor formation. Function may be isoform-specific: isoforms lacking the KTS motif may act as transcription factors. Isoforms containing the KTS motif may bind mRNA and play a role in mRNA metabolism or splicing. This is Wilms tumor protein homolog (WT1) from Sminthopsis macroura (Stripe-faced dunnart).